The chain runs to 88 residues: MATKKSGGSSGNGRDSRGRRLGVKKFGSEKVIPGNIIIRQRGTKYHPGKNVGIGKDHTIFSKISGFVHFRKGVYNKTFVDVLEASSVS.

Residues 1–24 form a disordered region; sequence MATKKSGGSSGNGRDSRGRRLGVK.

It belongs to the bacterial ribosomal protein bL27 family.

This Ehrlichia chaffeensis (strain ATCC CRL-10679 / Arkansas) protein is Large ribosomal subunit protein bL27.